Reading from the N-terminus, the 806-residue chain is NADH-quinone oxidoreductase subunit G (806 aa).

Residues 15 to 93 (EMVTLTIDGV…DMVVRTQLTS (79 aa)) enclose the 2Fe-2S ferredoxin-type domain. Residues Cys-49, Cys-60, Cys-63, and Cys-77 each contribute to the [2Fe-2S] cluster site. Positions 95 to 134 (IADKAQHGVMELLLINHPLDCPMCDKGGECPLQNQAMSNG) constitute a 4Fe-4S His(Cys)3-ligated-type domain. Positions 111, 115, 118, 124, 164, 167, 170, 214, 240, 243, 247, and 275 each coordinate [4Fe-4S] cluster. The 4Fe-4S Mo/W bis-MGD-type domain maps to 233 to 289 (LVSSPSVCEHCASGCAQRTDHRRGKVLRRLAGDDPEVNEEWNCDKGRWAFTYATQPD).

The protein belongs to the complex I 75 kDa subunit family. [2Fe-2S] cluster serves as cofactor. The cofactor is [4Fe-4S] cluster.

The enzyme catalyses a quinone + NADH + 5 H(+)(in) = a quinol + NAD(+) + 4 H(+)(out). NDH-1 shuttles electrons from NADH, via FMN and iron-sulfur (Fe-S) centers, to quinones in the respiratory chain. The immediate electron acceptor for the enzyme in this species is believed to be menaquinone. Couples the redox reaction to proton translocation (for every two electrons transferred, four hydrogen ions are translocated across the cytoplasmic membrane), and thus conserves the redox energy in a proton gradient. The protein is NADH-quinone oxidoreductase subunit G (nuoG) of Mycobacterium bovis (strain ATCC BAA-935 / AF2122/97).